Consider the following 96-residue polypeptide: Nucleoid-associated protein DR_0199 (96 aa).

The protein belongs to the YbaB/EbfC family. Homodimer.

It is found in the cytoplasm. The protein resides in the nucleoid. Its function is as follows. Binds to DNA and alters its conformation. May be involved in regulation of gene expression, nucleoid organization and DNA protection. The sequence is that of Nucleoid-associated protein DR_0199 from Deinococcus radiodurans (strain ATCC 13939 / DSM 20539 / JCM 16871 / CCUG 27074 / LMG 4051 / NBRC 15346 / NCIMB 9279 / VKM B-1422 / R1).